The chain runs to 406 residues: Leu/Ile/Val-binding protein homolog 5 (406 aa).

An N-terminal signal peptide occupies residues 1–29; sequence MIGTRLPAWTRVLACGVAGLSLMTISAKA.

It belongs to the leucine-binding protein family.

Component of an amino-acid transport system. The chain is Leu/Ile/Val-binding protein homolog 5 from Brucella suis biovar 1 (strain 1330).